Here is a 203-residue protein sequence, read N- to C-terminus: HTH-type transcriptional regulator BetI (203 aa).

In terms of domain architecture, HTH tetR-type spans 8–68 (PVRRKALVDA…ATIRSLLGKL (61 aa)). The H-T-H motif DNA-binding region spans 31–50 (TMSEIARTAGVSPALAHHYF).

Its pathway is amine and polyamine biosynthesis; betaine biosynthesis via choline pathway [regulation]. Repressor involved in the biosynthesis of the osmoprotectant glycine betaine. It represses transcription of the choline transporter BetT and the genes of BetAB involved in the synthesis of glycine betaine. This is HTH-type transcriptional regulator BetI from Rhizobium meliloti (strain 1021) (Ensifer meliloti).